The sequence spans 157 residues: Endoribonuclease YbeY (157 aa).

Residues histidine 114, histidine 118, and histidine 124 each contribute to the Zn(2+) site.

It belongs to the endoribonuclease YbeY family. Requires Zn(2+) as cofactor.

It is found in the cytoplasm. Functionally, single strand-specific metallo-endoribonuclease involved in late-stage 70S ribosome quality control and in maturation of the 3' terminus of the 16S rRNA. The polypeptide is Endoribonuclease YbeY (Edwardsiella ictaluri (strain 93-146)).